The sequence spans 368 residues: N-acetylneuraminate epimerase 2 (368 aa).

The signal sequence occupies residues 1–19; it reads MNKTITALAILMASFAANA. 7 Kelch repeats span residues 40-84, 86-137, 139-173, 174-219, 222-265, 287-336, and 338-367; these read TVYI…AFID, NLYV…FVHN, KAYVTGGVNQNIFNGYFEDLNEAGKDSTAIDKINA, YYFD…VNKG, TWLI…VAGG, ENYQ…LWNN, and LLIIGGEAAGGKAVTDSVLISVKDNKVTVQ. Glu-228 (proton acceptor) is an active-site residue.

Belongs to the NanM family. As to quaternary structure, homodimer.

It is found in the periplasm. The catalysed reaction is N-acetyl-alpha-neuraminate = N-acetyl-beta-neuraminate. In terms of biological role, converts alpha-N-acetylneuranimic acid (Neu5Ac) to the beta-anomer, accelerating the equilibrium between the alpha- and beta-anomers. Probably facilitates sialidase-negative bacteria to compete successfully for limited amounts of extracellular Neu5Ac, which is likely taken up in the beta-anomer. In addition, the rapid removal of sialic acid from solution might be advantageous to the bacterium to damp down host responses. This Escherichia coli O6:H1 (strain CFT073 / ATCC 700928 / UPEC) protein is N-acetylneuraminate epimerase 2.